A 383-amino-acid polypeptide reads, in one-letter code: Arginine biosynthesis bifunctional protein ArgJ (383 aa).

Substrate-binding residues include T146, K168, T179, E259, N378, and S383. T179 functions as the Nucleophile in the catalytic mechanism.

Belongs to the ArgJ family. As to quaternary structure, heterotetramer of two alpha and two beta chains.

The protein localises to the cytoplasm. It carries out the reaction N(2)-acetyl-L-ornithine + L-glutamate = N-acetyl-L-glutamate + L-ornithine. The enzyme catalyses L-glutamate + acetyl-CoA = N-acetyl-L-glutamate + CoA + H(+). The protein operates within amino-acid biosynthesis; L-arginine biosynthesis; L-ornithine and N-acetyl-L-glutamate from L-glutamate and N(2)-acetyl-L-ornithine (cyclic): step 1/1. It functions in the pathway amino-acid biosynthesis; L-arginine biosynthesis; N(2)-acetyl-L-ornithine from L-glutamate: step 1/4. In terms of biological role, catalyzes two activities which are involved in the cyclic version of arginine biosynthesis: the synthesis of N-acetylglutamate from glutamate and acetyl-CoA as the acetyl donor, and of ornithine by transacetylation between N(2)-acetylornithine and glutamate. This is Arginine biosynthesis bifunctional protein ArgJ from Streptomyces coelicolor (strain ATCC BAA-471 / A3(2) / M145).